Here is a 31-residue protein sequence, read N- to C-terminus: Cytochrome b6-f complex subunit 6 (31 aa).

The helical transmembrane segment at 4-26 (LTSYFGFLLAALTITSALFIGLS) threads the bilayer.

It belongs to the PetL family. In terms of assembly, the 4 large subunits of the cytochrome b6-f complex are cytochrome b6, subunit IV (17 kDa polypeptide, PetD), cytochrome f and the Rieske protein, while the 4 small subunits are PetG, PetL, PetM and PetN. The complex functions as a dimer.

It localises to the plastid. The protein localises to the chloroplast thylakoid membrane. Component of the cytochrome b6-f complex, which mediates electron transfer between photosystem II (PSII) and photosystem I (PSI), cyclic electron flow around PSI, and state transitions. PetL is important for photoautotrophic growth as well as for electron transfer efficiency and stability of the cytochrome b6-f complex. The polypeptide is Cytochrome b6-f complex subunit 6 (Aethionema cordifolium (Lebanon stonecress)).